The sequence spans 443 residues: Intermediate filament protein ifd-2 (443 aa).

The head stretch occupies residues 1 to 58 (MTDPLNPTRLQNHPALARIIESGRTNLPTGITTSGALSAYAQNAAAIIRDNREREKVE). An IF rod domain is found at 55–405 (EKVEIADLNN…KLMENAEHLR (351 aa)). Residues 59 to 90 (IADLNNRLARYVEKVRFLEAQNRVLENDIGVF) are coil 1A. The linker 1 stretch occupies residues 91 to 104 (RNAAHTHSERIAVY). A coil 1B region spans residues 105-239 (FESEKASLFT…SQHDIAIREE (135 aa)). The interval 240 to 257 (ISKARRDTTNKNRDYFHN) is linker 12. The coil 2 stretch occupies residues 258 to 403 (ELHAAMKEIR…YRKLMENAEH (146 aa)). Residues 404–443 (LRTTVQTHVTYNAPPPPLPQSGPRTTSYHAYGSAYNDSLL) form a tail region.

This sequence belongs to the intermediate filament family.

The protein localises to the cytoplasm. Cytoplasmic intermediate filaments provide mechanical strength to cells. Not essential protein. The polypeptide is Intermediate filament protein ifd-2 (ifd-2) (Caenorhabditis elegans).